Here is a 526-residue protein sequence, read N- to C-terminus: Exodeoxyribonuclease 7 large subunit (526 aa).

A disordered region spans residues 497-526; the sequence is AMTTEGGTPPAGAKKRSTKPAEPPKQGSLF.

It belongs to the XseA family. In terms of assembly, heterooligomer composed of large and small subunits.

The protein localises to the cytoplasm. It catalyses the reaction Exonucleolytic cleavage in either 5'- to 3'- or 3'- to 5'-direction to yield nucleoside 5'-phosphates.. Bidirectionally degrades single-stranded DNA into large acid-insoluble oligonucleotides, which are then degraded further into small acid-soluble oligonucleotides. This Rhizobium johnstonii (strain DSM 114642 / LMG 32736 / 3841) (Rhizobium leguminosarum bv. viciae) protein is Exodeoxyribonuclease 7 large subunit.